Here is an 885-residue protein sequence, read N- to C-terminus: Aconitate hydratase A (885 aa).

The [4Fe-4S] cluster site is built by Cys425, Cys491, and Cys494.

Belongs to the aconitase/IPM isomerase family. Monomer. [4Fe-4S] cluster is required as a cofactor.

The catalysed reaction is citrate = D-threo-isocitrate. It carries out the reaction (2S,3R)-3-hydroxybutane-1,2,3-tricarboxylate = 2-methyl-cis-aconitate + H2O. It participates in carbohydrate metabolism; tricarboxylic acid cycle; isocitrate from oxaloacetate: step 2/2. The protein operates within organic acid metabolism; propanoate degradation. Involved in the catabolism of short chain fatty acids (SCFA) via the tricarboxylic acid (TCA)(acetyl degradation route) and probably the 2-methylcitrate cycle I (propionate degradation route). Catalyzes the reversible isomerization of citrate to isocitrate via cis-aconitate. Could catalyze the hydration of 2-methyl-cis-aconitate to yield (2R,3S)-2-methylisocitrate. The apo form of AcnA functions as a RNA-binding regulatory protein. This chain is Aconitate hydratase A (acnA), found in Rickettsia bellii (strain RML369-C).